A 207-amino-acid polypeptide reads, in one-letter code: Putative acetyltransferase C18B11.09c (207 aa).

Belongs to the transferase hexapeptide repeat family.

This Schizosaccharomyces pombe (strain 972 / ATCC 24843) (Fission yeast) protein is Putative acetyltransferase C18B11.09c.